Here is a 218-residue protein sequence, read N- to C-terminus: Glutathione S-transferase PM239X14 (218 aa).

The GST N-terminal domain occupies 2–85 (VTVKLYGMAY…YLVAKYGKGS (84 aa)). Glutathione contacts are provided by residues 12 to 13 (ST), 41 to 42 (HK), 55 to 56 (VI), and 69 to 70 (ES). Positions 93-218 (DPKAYGLFEQ…LLRNSSKEFM (126 aa)) constitute a GST C-terminal domain.

This sequence belongs to the GST superfamily. Phi family. As to expression, expressed in vegetative rosettes.

Its subcellular location is the cytoplasm. The protein resides in the cytosol. The catalysed reaction is RX + glutathione = an S-substituted glutathione + a halide anion + H(+). In terms of biological role, specifically catalyzes the conjugation of synthetic 1-chloro-2,4-ditrobenzene to GSH. Also functions as a glutathione peroxidase, converting linoleate oxidation products into their corresponding hydroxyacids. This enzyme may thus serve to protect the cell from oxygen toxicity as well as from exogenous toxins such as herbicides. This chain is Glutathione S-transferase PM239X14, found in Arabidopsis thaliana (Mouse-ear cress).